Here is a 184-residue protein sequence, read N- to C-terminus: Secreted protein B (184 aa).

A signal peptide spans 1 to 19; sequence MRFILVLVLILGLVSSSFG. Asn-129 carries an N-linked (GlcNAc...) asparagine glycan. Positions 164-166 match the Cell attachment site motif; the sequence is RGD.

The protein belongs to the Sct family.

Its subcellular location is the secreted. The protein is Secreted protein B (29C) of Dictyostelium discoideum (Social amoeba).